The following is a 301-amino-acid chain: Glycine--tRNA ligase alpha subunit (301 aa).

This sequence belongs to the class-II aminoacyl-tRNA synthetase family. Tetramer of two alpha and two beta subunits.

It is found in the cytoplasm. The catalysed reaction is tRNA(Gly) + glycine + ATP = glycyl-tRNA(Gly) + AMP + diphosphate. The polypeptide is Glycine--tRNA ligase alpha subunit (Variovorax paradoxus (strain S110)).